Reading from the N-terminus, the 156-residue chain is ATP synthase subunit b (156 aa).

The helical transmembrane segment at 7–29 (LLGQAISFAMFVWFCMKYVWPPI) threads the bilayer.

The protein belongs to the ATPase B chain family. In terms of assembly, F-type ATPases have 2 components, F(1) - the catalytic core - and F(0) - the membrane proton channel. F(1) has five subunits: alpha(3), beta(3), gamma(1), delta(1), epsilon(1). F(0) has three main subunits: a(1), b(2) and c(10-14). The alpha and beta chains form an alternating ring which encloses part of the gamma chain. F(1) is attached to F(0) by a central stalk formed by the gamma and epsilon chains, while a peripheral stalk is formed by the delta and b chains.

Its subcellular location is the cell inner membrane. In terms of biological role, f(1)F(0) ATP synthase produces ATP from ADP in the presence of a proton or sodium gradient. F-type ATPases consist of two structural domains, F(1) containing the extramembraneous catalytic core and F(0) containing the membrane proton channel, linked together by a central stalk and a peripheral stalk. During catalysis, ATP synthesis in the catalytic domain of F(1) is coupled via a rotary mechanism of the central stalk subunits to proton translocation. Functionally, component of the F(0) channel, it forms part of the peripheral stalk, linking F(1) to F(0). This chain is ATP synthase subunit b, found in Vibrio vulnificus (strain CMCP6).